Consider the following 616-residue polypeptide: Protein RIK (616 aa).

Over residues 1–11 the composition is skewed to basic and acidic residues; it reads MTEDRAHKVAD. A disordered region spans residues 1–32; that stretch reads MTEDRAHKVADEPAASGRQSPERKKRKWDQPA. The KH domain maps to 198–304; the sequence is GTTSESISVP…AKVLAENLLD (107 aa). 3 stretches are compositionally biased toward polar residues: residues 432–449, 475–484, and 491–502; these read TQAVPVTSTPTSMATKGN, TESQNSQQGS, and LDSSGNIGSSSI. 2 disordered regions span residues 432 to 455 and 467 to 616; these read TQAVPVTSTPTSMATKGNSILDAE and LPVS…HTCV. Pro residues predominate over residues 534-564; the sequence is LPPPLKSMLPLPPRSMPPPPPKSMPPPPPKF. 2 stretches are compositionally biased toward basic and acidic residues: residues 565–575 and 598–610; these read PSDEFLSRNEN and SERRPREPKEEKN.

As to quaternary structure, interacts with RS2. In terms of tissue distribution, expressed in vegetative tissues. More abundant in apices and young leaf primordia than in fully expanded leaf tissues.

The protein localises to the nucleus. This Zea mays (Maize) protein is Protein RIK.